A 203-amino-acid polypeptide reads, in one-letter code: ER membrane protein complex subunit 8/9 homolog (203 aa).

The 137-residue stretch at 4 to 140 folds into the MPN domain; sequence YKVSERAYAK…IQVFNCPGDS (137 aa).

The protein belongs to the EMC8/EMC9 family. In terms of assembly, component of the ER membrane protein complex (EMC).

It is found in the endoplasmic reticulum membrane. Part of the endoplasmic reticulum membrane protein complex (EMC) that enables the energy-independent insertion into endoplasmic reticulum membranes of newly synthesized multi-pass membrane proteins like rhodopsins. The sequence is that of ER membrane protein complex subunit 8/9 homolog from Drosophila melanogaster (Fruit fly).